Here is a 347-residue protein sequence, read N- to C-terminus: KRR1 small subunit processome component homolog (347 aa).

A KH domain is found at 124-194 (GCDIIKIGNL…VRDIVLETMN (71 aa)). The span at 231 to 246 (NKNLSKRKQPKVKKPK) shows a compositional bias: basic residues. The interval 231–347 (NKNLSKRKQP…LLKANKKSKS (117 aa)) is disordered. The stretch at 271–304 (FLNKEQKQAKRQQERQTKQAEAAKKQDERRNKDF) forms a coiled coil. Basic and acidic residues-rich tracts occupy residues 272-303 (LNKE…RNKD) and 318-329 (KANDNDSSDSRV). The span at 337 to 347 (KLLKANKKSKS) shows a compositional bias: basic residues.

The protein belongs to the KRR1 family. In terms of assembly, monomer. Component of the ribosomal small subunit (SSU) processome.

Its subcellular location is the nucleus. It is found in the nucleolus. Its function is as follows. Required for 40S ribosome biogenesis. Involved in nucleolar processing of pre-18S ribosomal RNA and ribosome assembly. Binds to RNA. Required for female germline development, cell viability during eye development and for survival of dividing cells and epithelial cells during early wing disk development. This chain is KRR1 small subunit processome component homolog, found in Drosophila willistoni (Fruit fly).